Reading from the N-terminus, the 196-residue chain is DnaA initiator-associating protein DiaA (196 aa).

Residues 34–196 (LVQSLLNGNK…DNTLFPHQDV (163 aa)) enclose the SIS domain.

The protein belongs to the SIS family. DiaA subfamily. Homotetramer; dimer of dimers.

Functionally, required for the timely initiation of chromosomal replication via direct interactions with the DnaA initiator protein. In Escherichia coli O6:K15:H31 (strain 536 / UPEC), this protein is DnaA initiator-associating protein DiaA.